Reading from the N-terminus, the 74-residue chain is Putative defensin-like protein 27 (74 aa).

A signal peptide spans 1–19 (MVHPRFVFFAFLALSVLLA). Intrachain disulfides connect cysteine 36-cysteine 74, cysteine 46-cysteine 65, cysteine 51-cysteine 70, and cysteine 55-cysteine 72.

The protein belongs to the DEFL family.

The protein localises to the secreted. This chain is Putative defensin-like protein 27, found in Arabidopsis thaliana (Mouse-ear cress).